We begin with the raw amino-acid sequence, 299 residues long: NmrA-like family domain-containing protein 1 (299 aa).

NADP(+) contacts are provided by residues 11–16 (GATGAQ), 37–41 (RDPGQ), 58–59 (DQ), 79–81 (TNY), K92, K133, and 155–158 (YFEN). Residues 153 to 189 (PCYFENLLSYFLPQKAPDGRSYLLSLPMGDVPIDGMS) form an interaction with ASS1 region.

This sequence belongs to the NmrA-type oxidoreductase family. Homodimer. Interacts with ASS1. Interaction is enhanced by low NADPH/NADP(+) ratios, which results in inhibition of ASS1 activity.

The protein localises to the cytoplasm. It is found in the perinuclear region. Its subcellular location is the nucleus. Redox sensor protein. Undergoes restructuring and subcellular redistribution in response to changes in intracellular NADPH/NADP(+) levels. At low NADPH concentrations the protein is found mainly as a monomer, and binds argininosuccinate synthase (ASS1), the enzyme involved in nitric oxide synthesis. Association with ASS1 impairs its activity and reduces the production of nitric oxide, which subsecuently prevents apoptosis. Under normal NADPH concentrations, the protein is found as a dimer and hides the binding site for ASS1. The homodimer binds one molecule of NADPH. Has higher affinity for NADPH than for NADP(+). Binding to NADPH is necessary to form a stable dimer. The polypeptide is NmrA-like family domain-containing protein 1 (NMRAL1) (Bos taurus (Bovine)).